Reading from the N-terminus, the 477-residue chain is Transmembrane and coiled-coil domain protein 3 (477 aa).

The disordered stretch occupies residues 1-24 (MPGSDTALTVDRTYSDPGRHHRCK). Phosphoserine is present on Ser46. Coiled coils occupy residues 63–83 (KVKLNADSLRQKILKVTEQIK) and 112–149 (KQVFEKKNQKSAHSIAQLQKKLEQYHRKLREIEQNGVT). Residues 234–280 (ASPRAYGGSATIVNKPKYGSDDECSSGTSGSADSNGNQSFGAGGTST) are disordered. Ser253 is subject to Phosphoserine. Positions 258-280 (SSGTSGSADSNGNQSFGAGGTST) are enriched in polar residues. A coiled-coil region spans residues 284 to 398 (QGKIAKIMEE…KLELHQQEQQ (115 aa)). Transmembrane regions (helical) follow at residues 409-429 (VLLGKCINVVLAFMTVILVCV) and 450-470 (FFAVTLLAIFCKNWDHILCAI).

Belongs to the TEX28 family. In terms of assembly, may form homodimers and heterodimers with TMCC2 or TMCC3 via the coiled-coil domains. Interacts with ribosomal proteins RPL4 and RPS6.

The protein localises to the endoplasmic reticulum membrane. This Mus musculus (Mouse) protein is Transmembrane and coiled-coil domain protein 3.